The following is a 285-amino-acid chain: Probable endonuclease 4 (285 aa).

Zn(2+) is bound by residues His69, His109, Glu145, Asp179, His182, His216, Asp229, His231, and Glu261.

Belongs to the AP endonuclease 2 family. Zn(2+) serves as cofactor.

The enzyme catalyses Endonucleolytic cleavage to 5'-phosphooligonucleotide end-products.. Its function is as follows. Endonuclease IV plays a role in DNA repair. It cleaves phosphodiester bonds at apurinic or apyrimidinic (AP) sites, generating a 3'-hydroxyl group and a 5'-terminal sugar phosphate. This is Probable endonuclease 4 from Enterobacter sp. (strain 638).